A 209-amino-acid chain; its full sequence is High-affinity nitrate transporter 3.2 (209 aa).

The first 22 residues, 1 to 22, serve as a signal peptide directing secretion; that stretch reads MAIHTLLFVSLLIFSLIESSSG. A helical transmembrane segment spans residues 177 to 197; the sequence is LDIASTFFSVFSVVSLFVFFV.

Belongs to the NAR2 family. Bearly detected in roots and shoots.

It is found in the cell membrane. In terms of biological role, acts as a dual component transporter with NTR2.1. Required for high-affinity nitrate transport. This chain is High-affinity nitrate transporter 3.2, found in Arabidopsis thaliana (Mouse-ear cress).